A 232-amino-acid chain; its full sequence is RNA chaperone ProQ (232 aa).

The interval Glu105 to Asp182 is disordered. 2 stretches are compositionally biased toward basic and acidic residues: residues Gln117–Glu138 and Arg147–His177.

The protein belongs to the ProQ family.

Its subcellular location is the cytoplasm. Functionally, RNA chaperone with significant RNA binding, RNA strand exchange and RNA duplexing activities. May regulate ProP activity through an RNA-based, post-transcriptional mechanism. The polypeptide is RNA chaperone ProQ (Escherichia coli O139:H28 (strain E24377A / ETEC)).